The primary structure comprises 191 residues: UPF0669 protein C6orf120 homolog (191 aa).

Positions 1–30 (MAAPRGRAAPWTTALLLLLTSQILSPGSCA) are cleaved as a signal peptide. Asparagine 53 carries an N-linked (GlcNAc...) asparagine glycan.

It belongs to the UPF0669 family.

It is found in the secreted. In terms of biological role, may be involved in induction of apoptosis in CD4(+) T-cells, but not CD8(+) T-cells or hepatocytes. In Macaca fascicularis (Crab-eating macaque), this protein is UPF0669 protein C6orf120 homolog.